A 311-amino-acid polypeptide reads, in one-letter code: Eukaryotic translation initiation factor 3 subunit E (311 aa).

Residues 100–280 (VYYNYPKGRD…MGVKSVSIHE (181 aa)) enclose the PCI domain.

It belongs to the eIF-3 subunit E family. Component of the eukaryotic translation initiation factor 3 (eIF-3) complex.

Its subcellular location is the cytoplasm. Component of the eukaryotic translation initiation factor 3 (eIF-3) complex, which is involved in protein synthesis of a specialized repertoire of mRNAs and, together with other initiation factors, stimulates binding of mRNA and methionyl-tRNAi to the 40S ribosome. The eIF-3 complex specifically targets and initiates translation of a subset of mRNAs involved in cell proliferation. This Caenorhabditis briggsae protein is Eukaryotic translation initiation factor 3 subunit E.